Consider the following 92-residue polypeptide: Small ribosomal subunit protein bS20 (92 aa).

The segment at 1 to 23 (MANSPSAKKRAIQAEKRRSHNAS) is disordered.

Belongs to the bacterial ribosomal protein bS20 family.

Its function is as follows. Binds directly to 16S ribosomal RNA. This Stutzerimonas stutzeri (strain A1501) (Pseudomonas stutzeri) protein is Small ribosomal subunit protein bS20.